The primary structure comprises 252 residues: Beta-carotene isomerase D27, chloroplastic (252 aa).

The N-terminal 43 residues, 1–43 (MDSKMIAHNMSLTPTLAQWKKLRLKPKHTFVVGVLARPTDDIS), are a transit peptide targeting the chloroplast.

It depends on Fe cation as a cofactor. As to expression, highly expressed in roots. Expressed at low levels in leaves and stems.

It is found in the plastid. It localises to the chloroplast. The enzyme catalyses all-trans-beta-carotene = 9-cis-beta-carotene. Involved in strigolactones biosynthesis by catalyzing the isomerization of the C9-C10 double bond in all-trans-beta-carotene leading to 9-cis-beta-carotene and providing the substrate for CCD7. Strigolactones are hormones that inhibit tillering and shoot branching through the MAX-dependent pathway, contribute to the regulation of shoot architectural response to phosphate-limiting conditions and function as rhizosphere signals that stimulate hyphal branching of arbuscular mycorrhizal fungi and trigger seed germination of root parasitic weeds. This is Beta-carotene isomerase D27, chloroplastic from Medicago truncatula (Barrel medic).